A 314-amino-acid polypeptide reads, in one-letter code: Secreted frizzled-related protein 1 (314 aa).

A signal peptide spans 1–31 (MGIGRSEGGRRGAALGVLLALGAALLAVGSA). Positions 53-169 (TKPPQCVDIP…FPEGDVCIAM (117 aa)) constitute an FZ domain. Disulfide bonds link Cys58/Cys121, Cys68/Cys114, Cys105/Cys140, Cys129/Cys166, and Cys133/Cys157. An N-linked (GlcNAc...) asparagine glycan is attached at Asn173. 3 disulfides stabilise this stretch: Cys186–Cys256, Cys189–Cys258, and Cys203–Cys306. In terms of domain architecture, NTR spans 186–306 (CPPCDNELKS…FMKKMKNHEC (121 aa)).

It belongs to the secreted frizzled-related protein (sFRP) family. As to quaternary structure, interacts with WNT1, WNT2 and FRZD6. Interacts with WNT4, WNT8 and MYOC. In terms of tissue distribution, widely expressed. Absent from lung, liver and peripheral blood leukocytes. Highest levels in heart and fetal kidney. Also expressed in testis, ovary, fetal brain and lung, leiomyomal cells, myometrial cells and vascular smooth muscle cells. Expressed in foreskin fibroblasts and in keratinocytes.

The protein resides in the secreted. Soluble frizzled-related proteins (sFRPS) function as modulators of Wnt signaling through direct interaction with Wnts. They have a role in regulating cell growth and differentiation in specific cell types. SFRP1 decreases intracellular beta-catenin levels. Has antiproliferative effects on vascular cells, in vitro and in vivo, and can induce, in vivo, an angiogenic response. In vascular cell cycle, delays the G1 phase and entry into the S phase. In kidney development, inhibits tubule formation and bud growth in metanephroi. Inhibits WNT1/WNT4-mediated TCF-dependent transcription. The chain is Secreted frizzled-related protein 1 (SFRP1) from Homo sapiens (Human).